A 255-amino-acid chain; its full sequence is NAD-dependent protein deacylase (255 aa).

The Deacetylase sirtuin-type domain maps to 1-253 (MEFSDELLAS…PLLLQALRRS (253 aa)). 22 to 42 (GAGVSAESGIPTFRDALTGFW) is a binding site for NAD(+). Tyr67 and Arg70 together coordinate substrate. Residue 101-104 (QNVD) coordinates NAD(+). The active-site Proton acceptor is the His119. Cys127, Cys130, Cys155, and Cys158 together coordinate Zn(2+). NAD(+) contacts are provided by residues 195–197 (GTS), 221–223 (NPA), and Ala239.

Belongs to the sirtuin family. Class III subfamily. Requires Zn(2+) as cofactor.

The protein resides in the cytoplasm. It catalyses the reaction N(6)-acetyl-L-lysyl-[protein] + NAD(+) + H2O = 2''-O-acetyl-ADP-D-ribose + nicotinamide + L-lysyl-[protein]. The catalysed reaction is N(6)-succinyl-L-lysyl-[protein] + NAD(+) + H2O = 2''-O-succinyl-ADP-D-ribose + nicotinamide + L-lysyl-[protein]. Its function is as follows. NAD-dependent lysine deacetylase and desuccinylase that specifically removes acetyl and succinyl groups on target proteins. Modulates the activities of several proteins which are inactive in their acylated form. The chain is NAD-dependent protein deacylase from Methylococcus capsulatus (strain ATCC 33009 / NCIMB 11132 / Bath).